Consider the following 234-residue polypeptide: Large ribosomal subunit protein uL1 (234 aa).

The protein belongs to the universal ribosomal protein uL1 family. Part of the 50S ribosomal subunit.

Its function is as follows. Binds directly to 23S rRNA. The L1 stalk is quite mobile in the ribosome, and is involved in E site tRNA release. In terms of biological role, protein L1 is also a translational repressor protein, it controls the translation of the L11 operon by binding to its mRNA. The protein is Large ribosomal subunit protein uL1 of Campylobacter fetus subsp. fetus (strain 82-40).